The primary structure comprises 452 residues: Tubulin alpha-8 chain (452 aa).

GTP is bound by residues Gln15, Glu74, Ser143, Gly147, Thr148, Thr182, Asn209, and Asn231. Position 74 (Glu74) interacts with Mg(2+). Residue Glu257 is part of the active site.

This sequence belongs to the tubulin family. In terms of assembly, dimer of alpha and beta chains. A typical microtubule is a hollow water-filled tube with an outer diameter of 25 nm and an inner diameter of 15 nM. Alpha-beta heterodimers associate head-to-tail to form protofilaments running lengthwise along the microtubule wall with the beta-tubulin subunit facing the microtubule plus end conferring a structural polarity. Microtubules usually have 13 protofilaments but different protofilament numbers can be found in some organisms and specialized cells. It depends on Mg(2+) as a cofactor.

It is found in the cytoplasm. The protein localises to the cytoskeleton. It carries out the reaction GTP + H2O = GDP + phosphate + H(+). In terms of biological role, tubulin is the major constituent of microtubules, a cylinder consisting of laterally associated linear protofilaments composed of alpha- and beta-tubulin heterodimers. Microtubules grow by the addition of GTP-tubulin dimers to the microtubule end, where a stabilizing cap forms. Below the cap, tubulin dimers are in GDP-bound state, owing to GTPase activity of alpha-tubulin. The sequence is that of Tubulin alpha-8 chain (tba-8) from Caenorhabditis elegans.